The following is an 89-amino-acid chain: MAHKKGTGSTRNGRDSNAQRLGVKRYGGEVVRAGNILVRQRGTKFHPGNNVGRGNDDTLFATIDGVVTFERYGKDRKRISVYPVAAAAS.

The segment at 1-22 is disordered; that stretch reads MAHKKGTGSTRNGRDSNAQRLG. Positions 7-19 are enriched in polar residues; that stretch reads TGSTRNGRDSNAQ.

It belongs to the bacterial ribosomal protein bL27 family.

The polypeptide is Large ribosomal subunit protein bL27 (Cyanothece sp. (strain PCC 7425 / ATCC 29141)).